The chain runs to 81 residues: Protein SyrA (81 aa).

Functionally, increases exopolysaccharide abundance. In Rhizobium meliloti (strain 1021) (Ensifer meliloti), this protein is Protein SyrA (syrA).